Consider the following 277-residue polypeptide: Protein RKD3 (277 aa).

The region spanning 142–226 (KRIIMKRRYR…LGNTKGRTPK (85 aa)) is the RWP-RK domain. A coiled-coil region spans residues 201–246 (RKLTSLNALIANLKDLLGNTKGRTPKSKLRNALELLEMEKKMIEEV).

The protein localises to the nucleus. Putative transcription factor. This Arabidopsis thaliana (Mouse-ear cress) protein is Protein RKD3 (RKD3).